A 173-amino-acid polypeptide reads, in one-letter code: Alpha-crystallin A chain (173 aa).

Residue M1 is modified to N-acetylmethionine. The required for complex formation with BFSP1 and BFSP2 stretch occupies residues 1–63; sequence MDIAIQHPWF…RSVLDSGISE (63 aa). A Deamidated glutamine; partial modification is found at Q6. Phosphoserine is present on S45. Q50 bears the Deamidated glutamine; partial mark. One can recognise a sHSP domain in the interval 52–162; that stretch reads LFRSVLDSGI…GHSERAIPVS (111 aa). Residue K70 is modified to N6-acetyllysine. Q90 is subject to Deamidated glutamine; partial. The residue at position 99 (K99) is an N6-acetyllysine. A Zn(2+)-binding site is contributed by H100. N101 carries the post-translational modification Deamidated asparagine; partial. Residues E102 and H107 each contribute to the Zn(2+) site. The residue at position 122 (S122) is a Phosphoserine. Deamidated asparagine; partial is present on N123. Residues 144–173 form a disordered region; that stretch reads PKVTSGMDAGHSERAIPVSREEKPSSAPSS. The segment covering 153-167 has biased composition (basic and acidic residues); that stretch reads GHSERAIPVSREEKP. Residue H154 participates in Zn(2+) binding. The O-linked (GlcNAc) serine glycan is linked to S162.

Belongs to the small heat shock protein (HSP20) family. As to quaternary structure, heteromer composed of three CRYAA and one CRYAB subunits. Inter-subunit bridging via zinc ions enhances stability, which is crucial as there is no protein turn over in the lens. Can also form homodimers and homotetramers (dimers of dimers) which serve as the building blocks of homooligomers. Within homooligomers, the zinc-binding motif is created from residues of 3 different molecules. His-100 and Glu-102 from one molecule are ligands of the zinc ion, and His-107 and His-154 residues from additional molecules complete the site with tetrahedral coordination geometry. Part of a complex required for lens intermediate filament formation composed of BFSP1, BFSP2 and CRYAA. Post-translationally, acetylation at Lys-70 may increase chaperone activity. Undergoes age-dependent proteolytical cleavage at the C-terminus.

It is found in the cytoplasm. The protein localises to the nucleus. Functionally, contributes to the transparency and refractive index of the lens. Acts as a chaperone, preventing aggregation of various proteins under a wide range of stress conditions. Required for the correct formation of lens intermediate filaments as part of a complex composed of BFSP1, BFSP2 and CRYAA. The chain is Alpha-crystallin A chain (CRYAA) from Phocoena phocoena (Harbor porpoise).